We begin with the raw amino-acid sequence, 144 residues long: 3-dehydroquinate dehydratase (144 aa).

The active-site Proton acceptor is Tyr23. Substrate is bound by residues Asn74, His80, and Asp87. The Proton donor role is filled by His101. Substrate-binding positions include 102 to 103 (LS) and Arg112.

It belongs to the type-II 3-dehydroquinase family. In terms of assembly, homododecamer.

The enzyme catalyses 3-dehydroquinate = 3-dehydroshikimate + H2O. Its pathway is metabolic intermediate biosynthesis; chorismate biosynthesis; chorismate from D-erythrose 4-phosphate and phosphoenolpyruvate: step 3/7. Catalyzes a trans-dehydration via an enolate intermediate. The polypeptide is 3-dehydroquinate dehydratase (Mesorhizobium japonicum (strain LMG 29417 / CECT 9101 / MAFF 303099) (Mesorhizobium loti (strain MAFF 303099))).